Consider the following 451-residue polypeptide: Trigger factor (451 aa).

The region spanning 163–248 is the PPIase FKBP-type domain; that stretch reads GDIIDMEYTV…IKALYANILP (86 aa).

The protein belongs to the FKBP-type PPIase family. Tig subfamily.

Its subcellular location is the cytoplasm. It carries out the reaction [protein]-peptidylproline (omega=180) = [protein]-peptidylproline (omega=0). Involved in protein export. Acts as a chaperone by maintaining the newly synthesized protein in an open conformation. Functions as a peptidyl-prolyl cis-trans isomerase. In Leptospira interrogans serogroup Icterohaemorrhagiae serovar copenhageni (strain Fiocruz L1-130), this protein is Trigger factor.